A 419-amino-acid polypeptide reads, in one-letter code: L-2-hydroxyglutarate dehydrogenase, mitochondrial (419 aa).

Residues 1 to 51 constitute a mitochondrion transit peptide; that stretch reads MVPALRYLVGACGRARGGFAGDFPGASGLASGRPRPLCGGSRSASTSSFDI. 2 positions are modified to N6-acetyllysine: lysine 104 and lysine 173.

Belongs to the L2HGDH family. The cofactor is FAD.

Its subcellular location is the mitochondrion. The enzyme catalyses (S)-2-hydroxyglutarate + A = 2-oxoglutarate + AH2. This is L-2-hydroxyglutarate dehydrogenase, mitochondrial (L2HGDH) from Pongo abelii (Sumatran orangutan).